A 46-amino-acid polypeptide reads, in one-letter code: uncharacterized protein (46 aa).

This is an uncharacterized protein from Escherichia coli.